The chain runs to 332 residues: Aquaporin Lacbi1:317173 (332 aa).

Positions M1 to S20 are enriched in polar residues. The segment at M1–R45 is disordered. At M1–E66 the chain is on the cytoplasmic side. A helical membrane pass occupies residues F67–S87. Residues T88–F100 are Extracellular-facing. Residues L101 to I121 form a helical membrane-spanning segment. Residues S122–K144 lie on the Cytoplasmic side of the membrane. The NPA 1 signature appears at N127–A129. A helical transmembrane segment spans residues V145–A165. Topologically, residues N166–Q199 are extracellular. The chain crosses the membrane as a helical span at residues A200 to L220. Residues T221 to N230 lie on the Cytoplasmic side of the membrane. The helical transmembrane segment at G231–E251 threads the bilayer. Residues T252–Q283 are Extracellular-facing. An NPA 2 motif is present at residues N257–A259. A helical membrane pass occupies residues Y284–Y304. Over D305–V332 the chain is Cytoplasmic.

This sequence belongs to the MIP/aquaporin (TC 1.A.8) family.

It localises to the membrane. It catalyses the reaction H2O(in) = H2O(out). It carries out the reaction NH4(+)(in) = NH4(+)(out). In terms of biological role, water channel required to facilitate the transport of water across membranes. Acts as the most efficient Laccaria water channel. In addition to water, also shows strong ammonium transport activity. May be involved in fungal nitrogen (ammonium) support of the plant host in symbiosis. This is Aquaporin Lacbi1:317173 from Laccaria bicolor (strain S238N-H82 / ATCC MYA-4686) (Bicoloured deceiver).